We begin with the raw amino-acid sequence, 195 residues long: MVDQAQDTLRPNNRLSDMQATMEQTQAFENRVLERLNAGKTVRSFLITAVELLTEAVNLLVLQVFRKDDYAVKYAVEPLLDGDGPLGDLSVRLKLIYGLGVINRQEYEDAELLMALREELNHDGNEYAFTDDEILGPFGELHCVAALPPPPQFEPADSSLYAMQIQRYQQAVRSTMVLSLTELISKISLKKAFQK.

Belongs to the MtlR/FumE family. In terms of assembly, homodimer. Can also form higher level multimer aggregates.

Involved in the repression of the expression of the mannitol mtlADR operon. Does not bind the operator/promoter regulatory region of this operon. Therefore, seems to belong to a new class of transcription factors in bacteria that may regulate gene expression indirectly, perhaps as a part of a larger transcriptional complex. The sequence is that of Mannitol operon repressor from Escherichia coli O6:H1 (strain CFT073 / ATCC 700928 / UPEC).